A 309-amino-acid chain; its full sequence is ADP-L-glycero-D-manno-heptose-6-epimerase (309 aa).

Residues 10-11 (LI), 31-32 (DN), K38, K53, 75-79 (QGACS), and N92 contribute to the NADP(+) site. Y139 (proton acceptor) is an active-site residue. K143 serves as a coordination point for NADP(+). A substrate-binding site is contributed by N168. Positions 169 and 177 each coordinate NADP(+). K177 functions as the Proton acceptor in the catalytic mechanism. Substrate contacts are provided by residues S179, H186, 200 to 203 (FAGS), R208, and Y271.

The protein belongs to the NAD(P)-dependent epimerase/dehydratase family. HldD subfamily. Homopentamer. Requires NADP(+) as cofactor.

The enzyme catalyses ADP-D-glycero-beta-D-manno-heptose = ADP-L-glycero-beta-D-manno-heptose. The protein operates within nucleotide-sugar biosynthesis; ADP-L-glycero-beta-D-manno-heptose biosynthesis; ADP-L-glycero-beta-D-manno-heptose from D-glycero-beta-D-manno-heptose 7-phosphate: step 4/4. Its function is as follows. Catalyzes the interconversion between ADP-D-glycero-beta-D-manno-heptose and ADP-L-glycero-beta-D-manno-heptose via an epimerization at carbon 6 of the heptose. This is ADP-L-glycero-D-manno-heptose-6-epimerase from Histophilus somni (strain 2336) (Haemophilus somnus).